The sequence spans 153 residues: Aspartate carbamoyltransferase regulatory chain (153 aa).

Zn(2+) contacts are provided by Cys109, Cys114, Cys138, and Cys141.

The protein belongs to the PyrI family. As to quaternary structure, contains catalytic and regulatory chains. It depends on Zn(2+) as a cofactor.

Involved in allosteric regulation of aspartate carbamoyltransferase. The protein is Aspartate carbamoyltransferase regulatory chain of Edwardsiella ictaluri (strain 93-146).